Consider the following 98-residue polypeptide: Large ribosomal subunit protein uL23 (98 aa).

Belongs to the universal ribosomal protein uL23 family. In terms of assembly, part of the 50S ribosomal subunit. Contacts protein L29, and trigger factor when it is bound to the ribosome.

One of the early assembly proteins it binds 23S rRNA. One of the proteins that surrounds the polypeptide exit tunnel on the outside of the ribosome. Forms the main docking site for trigger factor binding to the ribosome. In Cereibacter sphaeroides (strain ATCC 17029 / ATH 2.4.9) (Rhodobacter sphaeroides), this protein is Large ribosomal subunit protein uL23.